Consider the following 419-residue polypeptide: GTPase Obg (419 aa).

Residues 1–158 enclose the Obg domain; the sequence is MHFVDEAFNE…FKIKTELKVL (158 aa). Positions 159–324 constitute an OBG-type G domain; that stretch reads ADIGLLGFPS…LKYKMSSFLQ (166 aa). Residues 165–172, 190–194, 211–214, 278–281, and 305–307 contribute to the GTP site; these read GFPSVGKS, FTTIK, DLPG, NKMD, and SLV. Mg(2+)-binding residues include S172 and T192. In terms of domain architecture, OCT spans 342 to 419; that stretch reads TLTDNLKTIS…KICDRLFDFL (78 aa).

This sequence belongs to the TRAFAC class OBG-HflX-like GTPase superfamily. OBG GTPase family. In terms of assembly, monomer. Mg(2+) serves as cofactor.

It is found in the cytoplasm. Its function is as follows. An essential GTPase which binds GTP, GDP and possibly (p)ppGpp with moderate affinity, with high nucleotide exchange rates and a fairly low GTP hydrolysis rate. Plays a role in control of the cell cycle, stress response, ribosome biogenesis and in those bacteria that undergo differentiation, in morphogenesis control. This chain is GTPase Obg, found in Aster yellows witches'-broom phytoplasma (strain AYWB).